The chain runs to 252 residues: Protein IRON-RELATED TRANSCRIPTION FACTOR 3 (252 aa).

The tract at residues 36 to 49 (PRKVHKSEREKLKR) is basic motif. One can recognise a bHLH domain in the interval 36 to 86 (PRKVHKSEREKLKRGHLNDLFGELGNMLEADRQSNGKACILTDTTRILRDL). Residues 50–86 (GHLNDLFGELGNMLEADRQSNGKACILTDTTRILRDL) form a helix-loop-helix motif region. Residues 76–131 (LTDTTRILRDLLSQVKSLRQENSTLQNESNYVTMERNELQDENGALRSEISDLQNE) are a coiled coil. Residues 135–252 (RATGSPGWGH…GLPRMEDEQM (118 aa)) form a disordered region. Positions 162 to 176 (PSQQPMQPSPMTTST) are enriched in low complexity. A compositionally biased stretch (acidic residues) spans 208–219 (PAEDPEPSEDQE).

The protein belongs to the bHLH protein family.

The protein localises to the nucleus. Functionally, transcription factor that acts as a negative regulator of the iron deficiency response. Suppresses the induction of iron deficiency responsive genes, such as NAS1, NAS2, IRO2, IRT1, YSL15, and NRAMP1. The protein is Protein IRON-RELATED TRANSCRIPTION FACTOR 3 of Oryza sativa subsp. japonica (Rice).